We begin with the raw amino-acid sequence, 237 residues long: BTB/POZ domain-containing protein KCTD6 (237 aa).

The segment at 1–104 (MDNGDWGYMM…FYQIEPLIQC (104 aa)) is interaction with ANK1 isoform Mu7. The tract at residues 10–110 (MSDPVTLNVG…LIQCLNDPRP (101 aa)) is interaction with CUL3. The BTB domain maps to 12-81 (DPVTLNVGGH…LRTSELTLPL (70 aa)). Positions 113 to 187 (PMDTFEEVVE…TFGPCDYHQE (75 aa)) are interaction with USP21.

In terms of assembly, homopentamer. Interacts with KCTD11; KCTD6 and KCTD11 may associate in heteropentameric assemblies. Interacts (via BTB domain) with CUL3; initially a 4:4 stoichiometry has been reported, however, electron microscopy revealed pentameric states with a five-pointed pinwheel shape. The interaction with CUL3 is indicative for a participation in a BCR (BTB-CUL3-RBX1) E3 ubiquitin-protein ligase complex. Interacts with HDAC1; probably indirect as the interaction requires the presence of KCTD11. Interacts with USP21 (preferentially catalytic inactive form). Interacts with ANK1 isoform Mu7; detected in striated muscle. Interacts with USP11. Highly expressed in cerebellum and brain.

It is found in the cytoplasm. Its subcellular location is the myofibril. It localises to the sarcomere. The protein localises to the m line. Its pathway is protein modification; protein ubiquitination. Probable substrate-specific adapter of a BCR (BTB-CUL3-RBX1) E3 ubiquitin-protein ligase complex mediating the ubiquitination and subsequent proteasomal degradation of target proteins. Promotes the ubiquitination of HDAC1; the function seems to depend on KCTD11:KCTD6 oligomerization. Can function as antagonist of the Hedgehog pathway by affecting the nuclear transfer of transcription factor GLI1; the function probably occurs via HDAC1 down-regulation, keeping GLI1 acetylated and inactive. Inhibits cell growth and tumorigenicity of medulloblastoma (MDB). Involved in regulating protein levels of ANK1 isoform Mu7 probably implicating CUL3-dependent proteasomal degradation. This is BTB/POZ domain-containing protein KCTD6 (Kctd6) from Mus musculus (Mouse).